Reading from the N-terminus, the 398-residue chain is Acetylornithine aminotransferase (398 aa).

Residue Phe-129 coordinates pyridoxal 5'-phosphate. Position 132 (Arg-132) interacts with N(2)-acetyl-L-ornithine. Residue 214–217 (DEVQ) participates in pyridoxal 5'-phosphate binding. The residue at position 243 (Lys-243) is an N6-(pyridoxal phosphate)lysine. Ser-271 is a binding site for N(2)-acetyl-L-ornithine. Thr-272 lines the pyridoxal 5'-phosphate pocket.

This sequence belongs to the class-III pyridoxal-phosphate-dependent aminotransferase family. ArgD subfamily. Homodimer. It depends on pyridoxal 5'-phosphate as a cofactor.

The protein localises to the cytoplasm. The enzyme catalyses N(2)-acetyl-L-ornithine + 2-oxoglutarate = N-acetyl-L-glutamate 5-semialdehyde + L-glutamate. It participates in amino-acid biosynthesis; L-arginine biosynthesis; N(2)-acetyl-L-ornithine from L-glutamate: step 4/4. In Neisseria meningitidis serogroup B (strain ATCC BAA-335 / MC58), this protein is Acetylornithine aminotransferase.